The sequence spans 213 residues: Motile sperm domain-containing protein 1 (213 aa).

Positions Pro-16–Phe-143 constitute an MSP domain. A run of 2 helical transmembrane segments spans residues Ser-159–Gly-179 and Leu-191–Phe-211. A Nuclear export signal motif is present at residues Leu-205–Met-208.

The protein resides in the endoplasmic reticulum membrane. The protein localises to the golgi apparatus membrane. Functionally, plays a role in differentiation and/or proliferation of mesenchymal stem cells. Proposed to be involved in epithelial-to-mesenchymal transition (EMT). However, another study suggests that it is not required for EMT or stem cell self-renewal and acts during later stages of differentiation. This is Motile sperm domain-containing protein 1 (MOSPD1) from Bos taurus (Bovine).